The chain runs to 449 residues: MSKVASLDAFLTKVAQRDGYQPEFLQAVREVFTSIWPFLEANPKYRSEALLERLVEPERAFQFRVAWTDDKGQVQVNRAFRVQFNSAIGPFKGGMRFHPSVNLSILKFLGFEQIFKNALTTLPMGGAKGGSDFDPKGKSDAEVMRFCQALMAELYRHVGADTDVPAGDIGVGGREVGYLAGYMKKLSNQSACVFTGRGLSFGGSLIRPEATGYGLIYFAQAMLAEKGDSFAGKVVSVSGSGNVAQYAIEKALSLGAKVVTCSDSSGYVYDPNGFTTEKLAALFDIKNTKRGRVKDYAEQFGLQYFEGKRPWEVQVDIALPCATQNELELSDAQRLIKNGVKLVAEGANMPTTIEATEALLAADVLFGPGKAANAGGVATSGLEMAQSSQRLYWTAEEVDAQLHRIMLDIHANCKKYGTIEGQENINYVVGANVAGFVKVADAMLAQGVY.

Lys-92, Gln-113, and Lys-116 together coordinate substrate. Lys-128 acts as the Proton donor in catalysis. Residue Gly-167 coordinates substrate. Positions 211 and 242 each coordinate NADP(+). Ser-380 contacts substrate.

This sequence belongs to the Glu/Leu/Phe/Val dehydrogenases family. Homohexamer.

The enzyme catalyses L-glutamate + NADP(+) + H2O = 2-oxoglutarate + NH4(+) + NADPH + H(+). In terms of biological role, catalyzes the reversible oxidative deamination of glutamate to alpha-ketoglutarate and ammonia. In Haemophilus influenzae (strain ATCC 51907 / DSM 11121 / KW20 / Rd), this protein is NADP-specific glutamate dehydrogenase (gdhA).